The primary structure comprises 489 residues: Cobyric acid synthase (489 aa).

The region spanning 251-439 is the GATase cobBQ-type domain; sequence RLTVVAPVYP…LHGLFDTPAA (189 aa). The active-site Nucleophile is the Cys-332. His-431 is a catalytic residue.

The protein belongs to the CobB/CobQ family. CobQ subfamily.

The protein operates within cofactor biosynthesis; adenosylcobalamin biosynthesis. Catalyzes amidations at positions B, D, E, and G on adenosylcobyrinic A,C-diamide. NH(2) groups are provided by glutamine, and one molecule of ATP is hydrogenolyzed for each amidation. The protein is Cobyric acid synthase of Aromatoleum aromaticum (strain DSM 19018 / LMG 30748 / EbN1) (Azoarcus sp. (strain EbN1)).